Here is a 101-residue protein sequence, read N- to C-terminus: RNA-binding protein Hfq (101 aa).

One can recognise a Sm domain in the interval 9–68; it reads DPFLNALRRERVPVSIYLVNGIKLQGQVESFDQFVILLKNTVSQMVYKHAISTVVPSPPV. The tract at residues 62-101 is disordered; the sequence is VVPSPPVSHHSNTPSGSTNNYHGSNPSAPQQPQQDSDDAE. Polar residues predominate over residues 70–86; the sequence is HHSNTPSGSTNNYHGSN.

Belongs to the Hfq family. In terms of assembly, homohexamer.

In terms of biological role, RNA chaperone that binds small regulatory RNA (sRNAs) and mRNAs to facilitate mRNA translational regulation in response to envelope stress, environmental stress and changes in metabolite concentrations. Also binds with high specificity to tRNAs. In Yersinia pestis (strain Pestoides F), this protein is RNA-binding protein Hfq.